A 103-amino-acid polypeptide reads, in one-letter code: Large ribosomal subunit protein bL21 (103 aa).

Belongs to the bacterial ribosomal protein bL21 family. As to quaternary structure, part of the 50S ribosomal subunit. Contacts protein L20.

In terms of biological role, this protein binds to 23S rRNA in the presence of protein L20. The chain is Large ribosomal subunit protein bL21 from Mycobacteroides abscessus (strain ATCC 19977 / DSM 44196 / CCUG 20993 / CIP 104536 / JCM 13569 / NCTC 13031 / TMC 1543 / L948) (Mycobacterium abscessus).